The following is a 58-amino-acid chain: Large ribosomal subunit protein bL32 (58 aa).

The segment covering 1–15 (MAVPKKKTSKAKRNQ) has biased composition (basic residues). Residues 1–23 (MAVPKKKTSKAKRNQRSATWKGK) are disordered.

It belongs to the bacterial ribosomal protein bL32 family.

The chain is Large ribosomal subunit protein bL32 from Synechococcus sp. (strain CC9902).